Here is a 202-residue protein sequence, read N- to C-terminus: Large ribosomal subunit protein bL25 (202 aa).

Belongs to the bacterial ribosomal protein bL25 family. CTC subfamily. In terms of assembly, part of the 50S ribosomal subunit; part of the 5S rRNA/L5/L18/L25 subcomplex. Contacts the 5S rRNA. Binds to the 5S rRNA independently of L5 and L18.

Its function is as follows. This is one of the proteins that binds to the 5S RNA in the ribosome where it forms part of the central protuberance. This chain is Large ribosomal subunit protein bL25, found in Rickettsia bellii (strain OSU 85-389).